Reading from the N-terminus, the 160-residue chain is Ribosomal RNA large subunit methyltransferase H (160 aa).

S-adenosyl-L-methionine is bound by residues Leu-76 and Gly-108.

Belongs to the RNA methyltransferase RlmH family. As to quaternary structure, homodimer.

Its subcellular location is the cytoplasm. The catalysed reaction is pseudouridine(1915) in 23S rRNA + S-adenosyl-L-methionine = N(3)-methylpseudouridine(1915) in 23S rRNA + S-adenosyl-L-homocysteine + H(+). Functionally, specifically methylates the pseudouridine at position 1915 (m3Psi1915) in 23S rRNA. The sequence is that of Ribosomal RNA large subunit methyltransferase H from Bradyrhizobium diazoefficiens (strain JCM 10833 / BCRC 13528 / IAM 13628 / NBRC 14792 / USDA 110).